Consider the following 153-residue polypeptide: IAA acetyltransferase (153 aa).

The N-acetyltransferase domain occupies 4-153 (VTIARESPLQ…PLSLFMEKPL (150 aa)).

In terms of biological role, participates in the tryptophan-dependent indole-3-acetic acid production, which is a phytohormone released by A.brasilense. In Azospirillum brasilense, this protein is IAA acetyltransferase.